The following is a 198-amino-acid chain: Segregation and condensation protein B (198 aa).

Belongs to the ScpB family. As to quaternary structure, homodimer. Homodimerization may be required to stabilize the binding of ScpA to the Smc head domains. Component of a cohesin-like complex composed of ScpA, ScpB and the Smc homodimer, in which ScpA and ScpB bind to the head domain of Smc. The presence of the three proteins is required for the association of the complex with DNA.

The protein localises to the cytoplasm. Functionally, participates in chromosomal partition during cell division. May act via the formation of a condensin-like complex containing Smc and ScpA that pull DNA away from mid-cell into both cell halves. In Acetivibrio thermocellus (strain ATCC 27405 / DSM 1237 / JCM 9322 / NBRC 103400 / NCIMB 10682 / NRRL B-4536 / VPI 7372) (Clostridium thermocellum), this protein is Segregation and condensation protein B.